A 347-amino-acid polypeptide reads, in one-letter code: Putative [LysW]-L-2-aminoadipate/[LysW]-L-glutamate phosphate reductase (347 aa).

NADP(+) is bound at residue 9-12 (SGYI). Residue C149 is part of the active site. N314 provides a ligand contact to NADP(+).

This sequence belongs to the NAGSA dehydrogenase family. Type 1 subfamily. LysY sub-subfamily.

It localises to the cytoplasm. The catalysed reaction is [amino-group carrier protein]-C-terminal-N-(1-carboxy-5-oxopentan-1-yl)-L-glutamine + phosphate + NADP(+) = [amino-group carrier protein]-C-terminal-N-(1-carboxy-5-phosphooxy-5-oxopentan-1-yl)-L-glutamine + NADPH + H(+). It carries out the reaction [amino-group carrier protein]-C-terminal-gamma-(L-glutamyl-5-semialdehyde)-L-glutamate + phosphate + NADP(+) = [amino-group carrier protein]-C-terminal-gamma-(5-phospho-L-glutamyl)-L-glutamate + NADPH + H(+). It participates in amino-acid biosynthesis; L-lysine biosynthesis via AAA pathway; L-lysine from L-alpha-aminoadipate (Thermus route): step 3/5. The protein operates within amino-acid biosynthesis; L-arginine biosynthesis. Functionally, involved in both the arginine and lysine biosynthetic pathways. The sequence is that of Putative [LysW]-L-2-aminoadipate/[LysW]-L-glutamate phosphate reductase from Picrophilus torridus (strain ATCC 700027 / DSM 9790 / JCM 10055 / NBRC 100828 / KAW 2/3).